Consider the following 365-residue polypeptide: Aminomethyltransferase (365 aa).

It belongs to the GcvT family. The glycine cleavage system is composed of four proteins: P, T, L and H.

The catalysed reaction is N(6)-[(R)-S(8)-aminomethyldihydrolipoyl]-L-lysyl-[protein] + (6S)-5,6,7,8-tetrahydrofolate = N(6)-[(R)-dihydrolipoyl]-L-lysyl-[protein] + (6R)-5,10-methylene-5,6,7,8-tetrahydrofolate + NH4(+). Its function is as follows. The glycine cleavage system catalyzes the degradation of glycine. This chain is Aminomethyltransferase, found in Halalkalibacterium halodurans (strain ATCC BAA-125 / DSM 18197 / FERM 7344 / JCM 9153 / C-125) (Bacillus halodurans).